Consider the following 219-residue polypeptide: Orotate phosphoribosyltransferase (219 aa).

K26 is a binding site for 5-phospho-alpha-D-ribose 1-diphosphate. F34–F35 lines the orotate pocket. 5-phospho-alpha-D-ribose 1-diphosphate is bound by residues Y72–K73, R98, K99, K102, H104, and D124–A132. Residues T128 and R156 each coordinate orotate.

The protein belongs to the purine/pyrimidine phosphoribosyltransferase family. PyrE subfamily. In terms of assembly, homodimer. Mg(2+) is required as a cofactor.

It catalyses the reaction orotidine 5'-phosphate + diphosphate = orotate + 5-phospho-alpha-D-ribose 1-diphosphate. The protein operates within pyrimidine metabolism; UMP biosynthesis via de novo pathway; UMP from orotate: step 1/2. Functionally, catalyzes the transfer of a ribosyl phosphate group from 5-phosphoribose 1-diphosphate to orotate, leading to the formation of orotidine monophosphate (OMP). The chain is Orotate phosphoribosyltransferase from Xanthomonas oryzae pv. oryzae (strain MAFF 311018).